Reading from the N-terminus, the 438-residue chain is Thymidine phosphorylase (438 aa).

Belongs to the thymidine/pyrimidine-nucleoside phosphorylase family. In terms of assembly, homodimer.

It carries out the reaction thymidine + phosphate = 2-deoxy-alpha-D-ribose 1-phosphate + thymine. Its pathway is pyrimidine metabolism; dTMP biosynthesis via salvage pathway; dTMP from thymine: step 1/2. Functionally, the enzymes which catalyze the reversible phosphorolysis of pyrimidine nucleosides are involved in the degradation of these compounds and in their utilization as carbon and energy sources, or in the rescue of pyrimidine bases for nucleotide synthesis. This chain is Thymidine phosphorylase, found in Sinorhizobium medicae (strain WSM419) (Ensifer medicae).